Consider the following 377-residue polypeptide: Succinyl-diaminopimelate desuccinylase (377 aa).

Histidine 68 contacts Zn(2+). Aspartate 70 is a catalytic residue. Residue aspartate 101 coordinates Zn(2+). The active-site Proton acceptor is the glutamate 135. The Zn(2+) site is built by glutamate 136, glutamate 164, and histidine 350.

This sequence belongs to the peptidase M20A family. DapE subfamily. Homodimer. Zn(2+) is required as a cofactor.

It carries out the reaction N-succinyl-(2S,6S)-2,6-diaminopimelate + H2O = (2S,6S)-2,6-diaminopimelate + succinate. It functions in the pathway amino-acid biosynthesis; L-lysine biosynthesis via DAP pathway; LL-2,6-diaminopimelate from (S)-tetrahydrodipicolinate (succinylase route): step 3/3. In terms of biological role, catalyzes the hydrolysis of N-succinyl-L,L-diaminopimelic acid (SDAP), forming succinate and LL-2,6-diaminopimelate (DAP), an intermediate involved in the bacterial biosynthesis of lysine and meso-diaminopimelic acid, an essential component of bacterial cell walls. This Vibrio cholerae serotype O1 (strain ATCC 39315 / El Tor Inaba N16961) protein is Succinyl-diaminopimelate desuccinylase (dapE).